The sequence spans 227 residues: NADH-quinone oxidoreductase subunit C (227 aa).

This sequence belongs to the complex I 30 kDa subunit family. NDH-1 is composed of 14 different subunits. Subunits NuoB, C, D, E, F, and G constitute the peripheral sector of the complex.

The protein localises to the cell inner membrane. It carries out the reaction a quinone + NADH + 5 H(+)(in) = a quinol + NAD(+) + 4 H(+)(out). Its function is as follows. NDH-1 shuttles electrons from NADH, via FMN and iron-sulfur (Fe-S) centers, to quinones in the respiratory chain. The immediate electron acceptor for the enzyme in this species is believed to be ubiquinone. Couples the redox reaction to proton translocation (for every two electrons transferred, four hydrogen ions are translocated across the cytoplasmic membrane), and thus conserves the redox energy in a proton gradient. This chain is NADH-quinone oxidoreductase subunit C, found in Coxiella burnetii (strain Dugway 5J108-111).